Here is a 542-residue protein sequence, read N- to C-terminus: Propane 2-monooxygenase, hydroxylase component large subunit (542 aa).

Residues glutamate 97, glutamate 127, histidine 130, glutamate 192, glutamate 226, and histidine 229 each contribute to the Fe cation site.

It belongs to the TmoA/XamoA family. The propane 2-monooxygenase multicomponent enzyme system is composed of an electron transfer component and a monooxygenase component interacting with the effector protein MimD. The electron transfer component is composed of a reductase (MimB), and the monooxygenase component is formed by a large subunit (MimA) and a small subunit (MimC). Requires the presence of the chaperonin-like protein MimG to ensure a productive folding, resulting of a soluble MimA, which leads to the active form of MimABCD. The cofactor is Fe(2+).

It catalyses the reaction propane + NADH + O2 + H(+) = propan-2-ol + NAD(+) + H2O. The catalysed reaction is acetone + NADH + O2 + H(+) = hydroxyacetone + NAD(+) + H2O. The enzyme catalyses butan-2-one + NADH + O2 + H(+) = 1-hydroxy-2-butanone + NAD(+) + H2O. It carries out the reaction phenol + NADH + O2 + H(+) = hydroquinone + NAD(+) + H2O. Its function is as follows. Component of the propane 2-monooxygenase multicomponent enzyme system which is involved in the degradation of propane via the O2-dependent hydroxylation of propane. Also involved in the degradation of acetone via the O2-dependent hydroxylation of acetone. Also able to catalyze the oxidation of phenol, methylethylketone (2-butanone), 1-propanol and 2-propanol. In Mycolicibacterium smegmatis (strain ATCC 700084 / mc(2)155) (Mycobacterium smegmatis), this protein is Propane 2-monooxygenase, hydroxylase component large subunit.